We begin with the raw amino-acid sequence, 237 residues long: 3-oxoacyl-[acyl-carrier-protein] reductase (237 aa).

Met-1 is subject to N-acetylmethionine. NADP(+)-binding positions include 11–14 (SRGI), 34–35 (RN), Asp-56, and 83–85 (AAG). Substrate is bound at residue Ser-135. Residues Tyr-148, Lys-152, and 181–183 (IHT) each bind NADP(+). The active-site Proton acceptor is Tyr-148. The residue at position 195 (Lys-195) is an N6-acetyllysine.

It belongs to the short-chain dehydrogenases/reductases (SDR) family. In terms of assembly, homotetramer (in vitro). Heterotetramer with HSD17B8; contains two molecules each of HSD17B8 and CBR4. Does not form homotetramers when HSD17B8 is coexpressed, only heterotetramers (in vitro).

Its subcellular location is the mitochondrion matrix. It catalyses the reaction a (3R)-hydroxyacyl-[ACP] + NADP(+) = a 3-oxoacyl-[ACP] + NADPH + H(+). The catalysed reaction is a quinone + NADPH + H(+) = a quinol + NADP(+). The protein operates within lipid metabolism; fatty acid biosynthesis. Functionally, component of the heterotetramer complex KAR (3-ketoacyl-[acyl carrier protein] reductase or 3-ketoacyl-[ACP] reductase) that forms part of the mitochondrial fatty acid synthase (mtFAS). Beta-subunit of the KAR heterotetramer complex, responsible for the 3-ketoacyl-ACP reductase activity of the mtFAS, reduces 3-oxoacyl-[ACP] to (3R)-hydroxyacyl-[ACP] in a NADPH-dependent manner with no chain length preference, thereby participating in mitochondrial fatty acid biosynthesis. The homotetramer has NADPH-dependent quinone reductase activity (in vitro), hence could play a role in protection against cytotoxicity of exogenous quinones. As a heterotetramer, it can also reduce 9,10-phenanthrenequinone, 1,4-benzoquinone and various other o-quinones and p-quinones (in vitro). The protein is 3-oxoacyl-[acyl-carrier-protein] reductase (CBR4) of Bos taurus (Bovine).